Consider the following 100-residue polypeptide: Omega-hexatoxin-Asp2a (100 aa).

Residues 1-23 (MKFSKLSITLAVILTQAVFVLCG) form the signal peptide. A propeptide spanning residues 24-55 (MKNEDFMEKGLESNELHDAIKKPVNSGKPDTE) is cleaved from the precursor. Intrachain disulfides connect Cys-60–Cys-73, Cys-66–Cys-79, and Cys-72–Cys-84.

The protein belongs to the neurotoxin 15 family. 02 (omega-actx) subfamily. In terms of tissue distribution, expressed by the venom gland.

The protein resides in the secreted. Its function is as follows. Potent inhibitor of insect, but not mammalian, voltage-gated calcium channels (Cav). In Atrax sp. (strain Illawarra) (Funnel-web spider), this protein is Omega-hexatoxin-Asp2a.